The chain runs to 921 residues: Collagen alpha-1(IX) chain (921 aa).

A signal peptide spans 1–23 (MKNFWKISVFFCVCSCLGPWVSA). The segment at 24–268 (TLKRRARFPA…ITTSQTTDER (245 aa)) is nonhelical region (NC4). 2 cysteine pairs are disulfide-bonded: cysteine 44–cysteine 242 and cysteine 198–cysteine 252. The 195-residue stretch at 50 to 244 (GQDDLPGFDL…LQWMLIHCDP (195 aa)) folds into the Laminin G-like domain. Residues aspartate 213, aspartate 215, and histidine 253 each contribute to the Zn(2+) site. Disordered regions lie at residues 253–759 (HELP…APTD) and 783–921 (RPDT…GPDK). Collagen-like domains are found at residues 269 to 325 (GPPG…PGAD), 326 to 356 (GLTG…GFPG), 358 to 403 (GIPG…GTIG), 416 to 472 (PPGR…GLRG), 473 to 512 (ITGI…PPGE), 604 to 656 (GKPG…LPGP), 657 to 711 (PGLP…PGEP), and 712 to 755 (GLRG…PPGR). The interval 269-405 (GPPGEQGPPG…PGPSGTIGFH (137 aa)) is triple-helical region (COL3). Composition is skewed to pro residues over residues 273 to 285 (EQGP…PPGV) and 298 to 310 (KGPP…PGDP). Positions 368-383 (TTGLPGELGRVGPIGD) are enriched in low complexity. Residues 387 to 398 (RGPPGPPGPPGP) show a composition bias toward pro residues. Residues 406-417 (DGDPLCPNSCPP) form a nonhelical region (NC3) region. Positions 418–756 (GRSGYPGLPG…PGIQGPPGRA (339 aa)) are triple-helical region (COL2). Over residues 479–489 (DKGEKGARGFD) the composition is skewed to basic and acidic residues. Composition is skewed to low complexity over residues 594 to 632 (PGKP…PVGP) and 639 to 650 (PGKLGSVGSPGL). Residues 757-786 (PTDQHIKQVCMRVVQEHFVEMAASLKRPDT) are nonhelical region (NC2). The segment at 787–901 (GASGLPGRPG…PGPPGPPGFC (115 aa)) is triple-helical region (COL1). The Collagen-like 9 domain maps to 790–847 (GLPGRPGPPGPPGPPGENGFPGQMGIRGLPGIKGPPGALGLRGPKGDLGEKGERGPPG). A compositionally biased stretch (pro residues) spans 794–804 (RPGPPGPPGPP). Over residues 833–845 (PKGDLGEKGERGP) the composition is skewed to basic and acidic residues. The span at 888 to 900 (VPGPPGPPGPPGF) shows a compositional bias: pro residues. The segment at 902–921 (EPASCTLQSGQRAFSKGPDK) is nonhelical region (NC1).

This sequence belongs to the fibril-associated collagens with interrupted helices (FACIT) family. Heterotrimer of an alpha 1(IX), an alpha 2(IX) and an alpha 3(IX) chain. In terms of processing, covalently linked to the telopeptides of type II collagen by lysine-derived cross-links. Post-translationally, prolines at the third position of the tripeptide repeating unit (G-X-Y) are hydroxylated in some or all of the chains.

The protein resides in the secreted. It localises to the extracellular space. It is found in the extracellular matrix. Functionally, structural component of hyaline cartilage and vitreous of the eye. In Mus musculus (Mouse), this protein is Collagen alpha-1(IX) chain (Col9a1).